A 334-amino-acid chain; its full sequence is Leucine-rich repeat-containing protein 26 (334 aa).

The N-terminal stretch at 1–30 is a signal peptide; the sequence is MRGSFFSRLPPQLSLLLLLLLLLSWRRVWT. Residues 31–265 lie on the Extracellular side of the membrane; that stretch reads QEHIGTDPSK…QCTQSLAARD (235 aa). The region spanning 38–75 is the LRRNT domain; sequence PSKSPVAPVCPEACSCSPGGKANCSALALPAVPAGLSW. 2 disulfides stabilise this stretch: Cys47–Cys53 and Cys51–Cys61. 5 LRR repeats span residues 76–97, 100–121, 124–145, 148–169, and 172–194; these read QVRS…AFAD, ALLY…AFWG, VLQR…TFTP, ALSF…ILGP, and LLRV…LNSL. One can recognise an LRRCT domain in the interval 205-259; the sequence is NPWACSCALRPLCTWLRKHPRPTSETETLLCVSPKLQTLNLLTDFPDNAFKQCTQ. 2 cysteine pairs are disulfide-bonded: Cys209–Cys235 and Cys211–Cys257. The helical transmembrane segment at 266 to 286 threads the bilayer; it reads LAVVYALGPASFLASLAICLA. Residues 287–334 lie on the Cytoplasmic side of the membrane; sequence LGSVLTACGARRRRRRTTVRHLIRRQPDPEGPASLEDVGSPTTTAIQA. Positions 312-334 are disordered; it reads QPDPEGPASLEDVGSPTTTAIQA.

Interacts with KCNMA1.

It localises to the cell membrane. The protein localises to the cytoplasm. Its subcellular location is the cytoskeleton. In terms of biological role, auxiliary protein of the large-conductance, voltage and calcium-activated potassium channel (BK alpha). Required for the conversion of BK alpha channels from a high-voltage to a low-voltage activated channel type in non-excitable cells. These are characterized by negative membrane voltages and constant low levels of calcium. The protein is Leucine-rich repeat-containing protein 26 (Lrrc26) of Rattus norvegicus (Rat).